We begin with the raw amino-acid sequence, 500 residues long: MSDFYWLTIIVVLPISAGSLIALLPHRGNKVVRWYTICICLFELLLTTYVFCYHFKLDDPLIQLEEDFNWINLFDFHWRLGIDGLSIGPILLTGFITTLATSAAWPVTRNSRLFHFLMLAMYSGQIGSFSSRDLLLFFIMWELELIPVYLLLSMWGGKKRLYSATKFILYTAGGSIFLLMGVLGMGLYGSNEPTLNFETLANQSYPVALEIIFYFGFLIAYAVKSPIIPLHTWLPDTHGEAHYSTCMLLAGILLKMGAYGLVRVNMELLPHAHSIFSPWLMIVGTIQIIYAALTSPGQRNLKKRIAYSSVSHMGFIIIGISSITDAGLNGAILQIISHGFIGAALFFLAGTSYDRIRLRYLNEMGGIAILMPRIFTMFSSFSMASLALPGMSGFVAEFVIFLGIITSPKYLVMSKILITFVMAIGMILTPIYSLSMSRQMFYGYRLFNVPKSHFVDSGPREIFIFMCILLPIIGIGIYPDFVLSLSVDKVETILSNYFHG.

Transmembrane regions (helical) follow at residues 4–24 (FYWL…IALL), 35–55 (YTIC…CYHF), 80–100 (LGID…TTLA), 113–130 (LFHF…GSFS), 134–154 (LLLF…LLSM), 167–187 (FILY…GMGL), 208–228 (ALEI…SPII), 242–262 (HYST…YGLV), 274–294 (SIFS…AALT), 305–325 (IAYS…SITD), 330–350 (GAIL…FLAG), 364–384 (MGGI…FSMA), 386–406 (LALP…GIIT), 416–436 (ILIT…SLSM), and 462–482 (IFIF…PDFV).

The protein belongs to the complex I subunit 4 family.

The protein resides in the plastid. Its subcellular location is the chloroplast thylakoid membrane. It carries out the reaction a plastoquinone + NADH + (n+1) H(+)(in) = a plastoquinol + NAD(+) + n H(+)(out). The catalysed reaction is a plastoquinone + NADPH + (n+1) H(+)(in) = a plastoquinol + NADP(+) + n H(+)(out). The protein is NAD(P)H-quinone oxidoreductase chain 4, chloroplastic of Nymphaea alba (White water-lily).